Reading from the N-terminus, the 213-residue chain is Adenylate kinase (213 aa).

10 to 15 (GAGKGT) contributes to the ATP binding site. The interval 30–59 (STGDMFRAAMANQTEMGLLAKSYIDKGDLV) is NMP. AMP contacts are provided by residues Thr-31, Arg-36, 57-59 (DLV), 86-89 (GYPR), and Gln-93. The tract at residues 127-160 (GRIIHKKTGETFHKIFNPPAGDYDENDYYQREDD) is LID. ATP contacts are provided by residues Arg-128 and 137–138 (TF). AMP is bound by residues Arg-157 and Arg-168. Position 196 (Gln-196) interacts with ATP.

The protein belongs to the adenylate kinase family. In terms of assembly, monomer.

Its subcellular location is the cytoplasm. It carries out the reaction AMP + ATP = 2 ADP. It participates in purine metabolism; AMP biosynthesis via salvage pathway; AMP from ADP: step 1/1. Functionally, catalyzes the reversible transfer of the terminal phosphate group between ATP and AMP. Plays an important role in cellular energy homeostasis and in adenine nucleotide metabolism. The polypeptide is Adenylate kinase (Streptococcus uberis (strain ATCC BAA-854 / 0140J)).